The following is a 267-amino-acid chain: Thiamine pyrophosphokinase 2 (267 aa).

Belongs to the thiamine pyrophosphokinase family.

The protein resides in the cytoplasm. It is found in the cytosol. The enzyme catalyses thiamine + ATP = thiamine diphosphate + AMP + H(+). It functions in the pathway cofactor biosynthesis; thiamine diphosphate biosynthesis; thiamine diphosphate from thiamine: step 1/1. Functionally, catalyzes the phosphorylation of thiamine to thiamine pyrophosphate (TPP). TPP is an active cofactor for enzymes involved in glycolysis and energy production. Plant leaves require high levels of TPP for photosynthesis and carbohydrate metabolism. The sequence is that of Thiamine pyrophosphokinase 2 (TPK2) from Oryza sativa subsp. japonica (Rice).